Here is a 305-residue protein sequence, read N- to C-terminus: UDP-3-O-acyl-N-acetylglucosamine deacetylase (305 aa).

Residues histidine 78, histidine 237, and aspartate 241 each coordinate Zn(2+). Residue histidine 264 is the Proton donor of the active site.

Belongs to the LpxC family. Zn(2+) is required as a cofactor.

It catalyses the reaction a UDP-3-O-[(3R)-3-hydroxyacyl]-N-acetyl-alpha-D-glucosamine + H2O = a UDP-3-O-[(3R)-3-hydroxyacyl]-alpha-D-glucosamine + acetate. The protein operates within glycolipid biosynthesis; lipid IV(A) biosynthesis; lipid IV(A) from (3R)-3-hydroxytetradecanoyl-[acyl-carrier-protein] and UDP-N-acetyl-alpha-D-glucosamine: step 2/6. Functionally, catalyzes the hydrolysis of UDP-3-O-myristoyl-N-acetylglucosamine to form UDP-3-O-myristoylglucosamine and acetate, the committed step in lipid A biosynthesis. The protein is UDP-3-O-acyl-N-acetylglucosamine deacetylase of Burkholderia pseudomallei (strain 668).